Reading from the N-terminus, the 98-residue chain is Defensin-like protein 68 (98 aa).

Residues 1–19 form the signal peptide; the sequence is MGSSKLLVALTLVVMITIS. 4 disulfide bridges follow: Cys-38–Cys-88, Cys-42–Cys-65, Cys-51–Cys-86, and Cys-55–Cys-87.

The protein belongs to the DEFL family.

Its subcellular location is the secreted. This is Defensin-like protein 68 from Arabidopsis thaliana (Mouse-ear cress).